The chain runs to 590 residues: Arginine--tRNA ligase (590 aa).

Positions 130–140 (PNIAKEMHVGH) match the 'HIGH' region motif.

Belongs to the class-I aminoacyl-tRNA synthetase family. In terms of assembly, monomer.

It is found in the cytoplasm. The enzyme catalyses tRNA(Arg) + L-arginine + ATP = L-arginyl-tRNA(Arg) + AMP + diphosphate. This Synechococcus sp. (strain CC9605) protein is Arginine--tRNA ligase.